The primary structure comprises 619 residues: tRNA (guanine(37)-N(1))-methyltransferase 2 (619 aa).

A mitochondrion-targeting transit peptide spans 1 to 10 (MVSKLSLFRA). S-adenosyl-L-methionine contacts are provided by residues R434, 472–473 (DL), 500–501 (DG), and N523.

It belongs to the class I-like SAM-binding methyltransferase superfamily. TRM5/TYW2 family. Monomer.

The protein localises to the mitochondrion matrix. The protein resides in the nucleus. It localises to the cytoplasm. The catalysed reaction is guanosine(37) in tRNA + S-adenosyl-L-methionine = N(1)-methylguanosine(37) in tRNA + S-adenosyl-L-homocysteine + H(+). Specifically methylates the N1 position of guanosine-37 in various cytoplasmic and mitochondrial tRNAs. Methylation is not dependent on the nature of the nucleoside 5' of the target nucleoside. This is the first step in the biosynthesis of wybutosine (yW), a modified base adjacent to the anticodon of tRNAs and required for accurate decoding. The polypeptide is tRNA (guanine(37)-N(1))-methyltransferase 2 (Arabidopsis thaliana (Mouse-ear cress)).